A 346-amino-acid chain; its full sequence is L-threonine dehydratase catabolic TdcB (346 aa).

59 to 60 (FT) provides a ligand contact to AMP. Residue Lys-64 is modified to N6-(pyridoxal phosphate)lysine. Residues Gln-94, 125 to 126 (GY), and Asn-321 each bind AMP.

The protein belongs to the serine/threonine dehydratase family. In terms of assembly, in the native structure, TdcB is in a dimeric form, whereas in the TdcB-AMP complex, it exists in a tetrameric form (dimer of dimers). Requires pyridoxal 5'-phosphate as cofactor.

The catalysed reaction is L-threonine = 2-oxobutanoate + NH4(+). The protein operates within amino-acid degradation; L-threonine degradation via propanoate pathway; propanoate from L-threonine: step 1/4. Its activity is regulated as follows. Each protein molecule can bind up to four molecules of AMP, which act as an allosteric activator to the enzyme. Catalyzes the anaerobic formation of alpha-ketobutyrate and ammonia from threonine in a two-step reaction. The first step involved a dehydration of threonine and a production of enamine intermediates (aminocrotonate), which tautomerizes to its imine form (iminobutyrate). Both intermediates are unstable and short-lived. The second step is the nonenzymatic hydrolysis of the enamine/imine intermediates to form 2-ketobutyrate and free ammonia. In the low water environment of the cell, the second step is accelerated by RidA. This Staphylococcus aureus (strain USA300) protein is L-threonine dehydratase catabolic TdcB (tdcB).